Consider the following 507-residue polypeptide: FSD1-like protein (507 aa).

The stretch at 70–109 forms a coiled coil; that stretch reads KQEQVRKSQELQSQLSQCNNALENSEELLEFATRSLDIKE. The COS domain occupies 105–162; that stretch reads LDIKEPEEFSKAARQIKDRVTMASAFRLSLKPKVSDNMTHLMVDFSQERQMLQTLKFL. In terms of domain architecture, Fibronectin type-III spans 164 to 268; the sequence is VPKAPEIDPV…DPVTLETRAL (105 aa). A B30.2/SPRY domain is found at 291 to 484; the sequence is DPTGGKGQES…LSTGMQVPSA (194 aa). Residues 292–345 form a disordered region; the sequence is PTGGKGQESKIKGKENKGSVHVTSLKKHTSGTPSPKRTSVGSRPPAVRGSRDRF. The segment covering 298–309 has biased composition (basic and acidic residues); that stretch reads QESKIKGKENKG. Over residues 321–332 the composition is skewed to polar residues; it reads SGTPSPKRTSVG. S498 and S501 each carry phosphoserine.

This is FSD1-like protein (Fsd1l) from Mus musculus (Mouse).